Consider the following 2624-residue polypeptide: Highly reducing polyketide synthase ALT1 (2624 aa).

Residues 28–449 enclose the Ketosynthase family 3 (KS3) domain; it reads VLPLAIVGMG…GSNAHCILES (422 aa). The active-site For beta-ketoacyl synthase activity is the C200. A disordered region spans residues 289 to 308; the sequence is VRGTSSNSDGKTPGMSMPSS. Residues H335 and H372 each act as for beta-ketoacyl synthase activity in the active site. Positions 523-544 are enriched in polar residues; sequence ESYSNHHTLTETTNPSNNTATN. The interval 523–545 is disordered; it reads ESYSNHHTLTETTNPSNNTATNG. Residues 639–945 are malonyl-CoA:ACP transacylase (MAT) domain; sequence VFTGQGAQWA…GYTPAMIRGK (307 aa). Residues 1009 to 1140 form an N-terminal hotdog fold region; the sequence is HELLGSQTLE…GQVRPGRDAH (132 aa). Residues 1009 to 1301 are dehydratase (DH) domain; the sequence is HELLGSQTLE…LEGGKFSPIE (293 aa). The region spanning 1009-1306 is the PKS/mFAS DH domain; it reads HELLGSQTLE…FSPIEVDDGI (298 aa). The active-site Proton acceptor; for dehydratase activity is H1041. The tract at residues 1157–1306 is C-terminal hotdog fold; it reads QYPRPVDSLY…FSPIEVDDGI (150 aa). The active-site Proton donor; for dehydratase activity is the D1217. The interval 1493-1599 is methyltransferase (CMet) domain; it reads LEIGAGTGGA…RKLLAPEGYL (107 aa). The tract at residues 1895-2205 is enoyl reductase (ER) (ER) domain; it reads GLLQTLKWVD…KGTHLGKIVV (311 aa). Positions 2230-2509 are ketoreductase (KR) domain; sequence TYVLVGGLGG…DSDALRFFIT (280 aa). The Carrier domain maps to 2522–2600; the sequence is ASLDLVTRTI…GLAKLILDAL (79 aa). S2559 bears the O-(pantetheine 4'-phosphoryl)serine mark.

The protein operates within mycotoxin biosynthesis. Its function is as follows. Highly reducing polyketide synthase; part of the gene cluster that mediates the biosynthesis of the host-selective toxins (HSTs) AAL-toxins, sphinganine-analog mycotoxins responsible for Alternaria stem canker on tomato by the tomato pathotype. The biosynthesis starts with the polyketide synthase ALT1-catalyzed C-16 carbon chain assembly from one starter acetyl-CoA unit with malonyl-CoA extender units. ALT1 also selectively transfers methyl groups at the first and the third cycle of chain elongation for AAL toxin. The C-16 polyketide chain is released from the enzyme by a nucleophilic attack of a carbanion, which is derived from R-carbon of glycin by decarboxylation, on the carbonyl carbon of polyketide acyl chain. This step is probably catalyzed by a pyridoxal 5'-phosphate-dependent aminoacyl transferase ALT4. The respective functions of the other enzymes encoded by the cluster have still to be elucidated. The sphingosine N-acyltransferase-like protein ALT7 seems not to act as a resistance/self-tolerance factor against the toxin in the toxin biosynthetic gene cluster, contrary to what is expected. This chain is Highly reducing polyketide synthase ALT1, found in Alternaria alternata (Alternaria rot fungus).